A 630-amino-acid polypeptide reads, in one-letter code: Phosphatidylinositol 4-kinase gamma 5 (630 aa).

The Ubiquitin-like; degenerate domain occupies R41–R98. One can recognise a PI3K/PI4K catalytic domain in the interval G162–P459. The G-loop stretch occupies residues V168–G174. Residues N169 to A175, K190, and Q279 to I282 contribute to the ATP site. The segment at L312 to N320 is catalytic loop. The segment at P339–I365 is activation loop. D341 is an ATP binding site. The tract at residues L500–D527 is disordered. A compositionally biased stretch (acidic residues) spans T506–D524. S571 carries the phosphoserine modification.

This sequence belongs to the PI3/PI4-kinase family. Type II PI4K subfamily. Interacts with AHK2.

It catalyses the reaction a 1,2-diacyl-sn-glycero-3-phospho-(1D-myo-inositol) + ATP = a 1,2-diacyl-sn-glycero-3-phospho-(1D-myo-inositol 4-phosphate) + ADP + H(+). The phosphorylation of phosphatidylinositol (PI) to PI4P is the first committed step in the generation of phosphatidylinositol 4,5-bisphosphate (PIP2), a precursor of the second messenger inositol 1,4,5-trisphosphate (InsP3). The polypeptide is Phosphatidylinositol 4-kinase gamma 5 (PI4KG5) (Arabidopsis thaliana (Mouse-ear cress)).